Consider the following 281-residue polypeptide: Thioesterase PikA5 (281 aa).

Residues 26–249 (RLVCLPHAGG…WHEICNDISD (224 aa)) form a thioesterase region. Serine 99 functions as the Nucleophile; for thioesterase activity in the catalytic mechanism. Histidine 233 functions as the Proton acceptor; for thioesterase activity in the catalytic mechanism.

It belongs to the thioesterase family.

It participates in antibiotic biosynthesis. In terms of biological role, involved in the biosynthesis of 12- and 14-membered ring macrolactone antibiotics such as methymycin, neomethymycin, narbomycin and pikromycin. Responsible for removing mis-formed acyl moieties (aberrant decarboxylation) that are bound to the PKS and could block it. Catalyzes the cleavage of methylmalonyl-[acp]. It exhibits some acyl-group specificity, and catalyzes the cleavage of propionyl and butyryl derivatives faster than acetyl malonyl or methylmalonyl derivatives. The sequence is that of Thioesterase PikA5 from Streptomyces venezuelae.